The sequence spans 881 residues: DNA mismatch repair protein MutS (881 aa).

605-612 is a binding site for ATP; it reads GPNMSGKS.

Belongs to the DNA mismatch repair MutS family.

Its function is as follows. This protein is involved in the repair of mismatches in DNA. It is possible that it carries out the mismatch recognition step. This protein has a weak ATPase activity. This Limosilactobacillus reuteri subsp. reuteri (strain JCM 1112) (Lactobacillus reuteri) protein is DNA mismatch repair protein MutS.